A 392-amino-acid chain; its full sequence is Formate-dependent phosphoribosylglycinamide formyltransferase (392 aa).

Residues 22 to 23 (EL) and Glu-82 contribute to the N(1)-(5-phospho-beta-D-ribosyl)glycinamide site. Residues Arg-114, Lys-155, 160-165 (SSGKGQ), 195-198 (EGVV), and Glu-203 each bind ATP. An ATP-grasp domain is found at 119 to 308 (RLAAEELQLP…EFALHVRAFL (190 aa)). Residues Glu-267 and Glu-279 each coordinate Mg(2+). N(1)-(5-phospho-beta-D-ribosyl)glycinamide is bound by residues Asp-286, Lys-355, and 362 to 363 (RR).

Belongs to the PurK/PurT family. Homodimer.

It catalyses the reaction N(1)-(5-phospho-beta-D-ribosyl)glycinamide + formate + ATP = N(2)-formyl-N(1)-(5-phospho-beta-D-ribosyl)glycinamide + ADP + phosphate + H(+). It participates in purine metabolism; IMP biosynthesis via de novo pathway; N(2)-formyl-N(1)-(5-phospho-D-ribosyl)glycinamide from N(1)-(5-phospho-D-ribosyl)glycinamide (formate route): step 1/1. In terms of biological role, involved in the de novo purine biosynthesis. Catalyzes the transfer of formate to 5-phospho-ribosyl-glycinamide (GAR), producing 5-phospho-ribosyl-N-formylglycinamide (FGAR). Formate is provided by PurU via hydrolysis of 10-formyl-tetrahydrofolate. The protein is Formate-dependent phosphoribosylglycinamide formyltransferase of Shigella dysenteriae serotype 1 (strain Sd197).